A 401-amino-acid polypeptide reads, in one-letter code: uncharacterized protein (401 aa).

The protein belongs to the herpesviridae BTRF1 family.

This is an uncharacterized protein from Connochaetes taurinus (Blue wildebeest).